A 312-amino-acid polypeptide reads, in one-letter code: Pantothenate kinase (312 aa).

97–104 is a binding site for ATP; that stretch reads GSVAVGKS.

It belongs to the prokaryotic pantothenate kinase family.

Its subcellular location is the cytoplasm. It catalyses the reaction (R)-pantothenate + ATP = (R)-4'-phosphopantothenate + ADP + H(+). It functions in the pathway cofactor biosynthesis; coenzyme A biosynthesis; CoA from (R)-pantothenate: step 1/5. The polypeptide is Pantothenate kinase (Mycolicibacterium smegmatis (strain ATCC 700084 / mc(2)155) (Mycobacterium smegmatis)).